We begin with the raw amino-acid sequence, 260 residues long: 3'-5' ssDNA/RNA exonuclease TatD (260 aa).

E91, H127, and H152 together coordinate a divalent metal cation.

Belongs to the metallo-dependent hydrolases superfamily. TatD-type hydrolase family. TatD subfamily. Monomer. Mg(2+) serves as cofactor.

The protein localises to the cytoplasm. Functionally, 3'-5' exonuclease that prefers single-stranded DNA and RNA. May play a role in the H(2)O(2)-induced DNA damage repair. The polypeptide is 3'-5' ssDNA/RNA exonuclease TatD (Enterobacter sp. (strain 638)).